The sequence spans 328 residues: Cytochrome c biogenesis protein CcsA (328 aa).

8 consecutive transmembrane segments (helical) span residues 13–33 (ISFS…LVNL), 46–66 (GIII…IFSG), 73–93 (LYES…VSYF), 101–121 (LNAI…SGLL), 146–166 (MILG…LLVI), 234–254 (IISL…VWAN), 263–283 (WDPK…YLHI), and 295–315 (AIVA…VNLL).

Belongs to the CcmF/CycK/Ccl1/NrfE/CcsA family. May interact with Ccs1.

Its subcellular location is the plastid. It localises to the chloroplast thylakoid membrane. Functionally, required during biogenesis of c-type cytochromes (cytochrome c6 and cytochrome f) at the step of heme attachment. This chain is Cytochrome c biogenesis protein CcsA, found in Olimarabidopsis pumila (Dwarf rocket).